We begin with the raw amino-acid sequence, 351 residues long: Purine permease 3 (351 aa).

10 consecutive transmembrane segments (helical) span residues 4–24 (ALVI…PLIM), 35–55 (IWFS…PLLF), 72–92 (FFLI…LSGF), 108–128 (TAAL…FFMV), 132–152 (FTPF…VLGM), 168–188 (ITGF…LPLV), 207–227 (FQLI…FIAG), 249–269 (VAVF…GLIF), 274–294 (LVSG…AVIF), and 304–324 (GLSL…EIKS). Positions 45–152 (GFPVIFIPLL…LTVGAAVLGM (108 aa)) constitute an EamA domain. The segment at 329 to 351 (RRIQQEESQETEQSSLSRPISEC) is disordered.

The protein belongs to the purine permeases (TC 2.A.7.14) family. In terms of tissue distribution, restricted to pollen.

The protein resides in the membrane. May be involved in transport of purine derivatives during pollen germination and tube elongation. This is Purine permease 3 (PUP3) from Arabidopsis thaliana (Mouse-ear cress).